A 718-amino-acid chain; its full sequence is Protein ENHANCED DISEASE RESISTANCE 2 (718 aa).

The 108-residue stretch at 3 to 110 folds into the PH domain; it reads KVVYEGWMVR…WKEKIESVID (108 aa). Residues 134-174 form a disordered region; the sequence is TGRTASSSDHESQFSAAEDEEDSRRSLMRRTTIGNGPPESV. The START domain occupies 180–392; that stretch reads EFDAELANQN…VAGLREWFSQ (213 aa). The interval 437–483 is disordered; sequence RNSLLMDEDSDDDDEFQIAESEQEPETSKPETDVKRPEEEPAHNIDL. Over residues 442-461 the composition is skewed to acidic residues; sequence MDEDSDDDDEFQIAESEQEP. Residues 462–479 show a composition bias toward basic and acidic residues; that stretch reads ETSKPETDVKRPEEEPAH. Residues 664-684 traverse the membrane as a helical segment; the sequence is GVLGLVIGVITSLVVEMAFLV.

Expressed ubiquitously in all tissues and organs, including leaves, roots, flowers, stems and siliques.

The protein localises to the endoplasmic reticulum membrane. Its subcellular location is the cell membrane. It is found in the endosome membrane. Its function is as follows. Negative regulator of the salicylic acid- (SA-) mediated resistance to pathogens, including the biotrophic powdery mildew pathogens Golovinomyces cichoracearum and Blumeria graminis, and the downy mildew pathogen Hyaloperonospora parasitica, probably by limiting the initiation of cell death and the establishment of the hypersensitive response (HR). Prevents ethylene-induced senescence. Binds to phosphatidylinositol-4-phosphate (PtdIns(4)P) in vitro. The sequence is that of Protein ENHANCED DISEASE RESISTANCE 2 (EDR2) from Arabidopsis thaliana (Mouse-ear cress).